Here is a 330-residue protein sequence, read N- to C-terminus: Adenylate isopentenyltransferase 5, chloroplastic (330 aa).

The transit peptide at 1–39 (MKPCMTALRQVIQPLSLNFQGNMVDVPFFRRKDKVVFVM) directs the protein to the chloroplast. 40-47 (GATGTGKS) serves as a coordination point for ATP.

The protein belongs to the IPP transferase family. As to expression, expressed in root primordia, columella root caps, upper part of young inflorescences, and fruit abscission zones.

The protein localises to the plastid. It localises to the chloroplast. It carries out the reaction dimethylallyl diphosphate + ADP = N(6)-(dimethylallyl)adenosine 5'-diphosphate + diphosphate. The catalysed reaction is dimethylallyl diphosphate + ATP = N(6)-(dimethylallyl)adenosine 5'-triphosphate + diphosphate. Its function is as follows. Involved in cytokinin biosynthesis. Catalyzes the transfer of an isopentenyl group from dimethylallyl diphosphate (DMAPP) to ATP and ADP. The chain is Adenylate isopentenyltransferase 5, chloroplastic (IPT5) from Arabidopsis thaliana (Mouse-ear cress).